Reading from the N-terminus, the 646-residue chain is Protein SENSITIVE TO UV 2 (646 aa).

The tract at residues 42–70 (PAPPPSTKISSSLSHPMQLQSSAGQQRKQ) is disordered. The span at 48–70 (TKISSSLSHPMQLQSSAGQQRKQ) shows a compositional bias: polar residues. Positions 119–126 (NRRCDSEK) match the Nuclear localization signal motif. Residues 123 to 157 (DSEKDLEIDRLKKELERVSKQLLDVEQECSQLKKG) adopt a coiled-coil conformation. Positions 376 to 646 (KRTEQDVKQE…VFAFLGDNTI (271 aa)) constitute a Phosphatase tensin-type domain.

It belongs to the serpin family. As to quaternary structure, forms multimers through the coiled-coil domain. Post-translationally, probably phosphorylated by ATR. As to expression, accumulates throughout the root tip.

The protein resides in the nucleus. Its subcellular location is the cytoplasm. Its function is as follows. Required for tolerance to DNA-damaging and cross-linking agents such as UVB irradiation, gamma-radiation, aphidicolin, ionizing radiation and hydroxyurea (HU), cisplatin (CDDP) and mitomycin C (MMC). Involved in cell-cycle G2/M arrest in response to DNA damage. Required for aluminum-dependent gene regulation and root growth inhibition in an ATR-dependent manner by halting cell cycle progression and triggering loss of the quiescent center (QC). In Arabidopsis thaliana (Mouse-ear cress), this protein is Protein SENSITIVE TO UV 2.